Consider the following 2226-residue polypeptide: Rotatin (2226 aa).

Positions 295–345 are disordered; sequence ARGTHHSQNPSPGSSSPRPSVVGRTGQRPRGDGQDWDAASSSGSSSHAHVN. Low complexity-rich tracts occupy residues 304 to 318 and 332 to 343; these read PSPGSSSPRPSVVGR and AASSSGSSSHAH. The residue at position 310 (Ser-310) is a Phosphoserine. Lys-811 is modified (N6-acetyllysine). The interval 1534–1554 is disordered; sequence SRTSQDRDPSSLSTSETTVAP. Positions 1543–1554 are enriched in polar residues; it reads SSLSTSETTVAP.

It belongs to the rotatin family. In terms of assembly, interacts with PPP1R35; this interaction allows the mutual recruitment to the centriole.

The protein resides in the cytoplasm. The protein localises to the cytoskeleton. Its subcellular location is the cilium basal body. It localises to the microtubule organizing center. It is found in the centrosome. Its function is as follows. Involved in the genetic cascade that governs left-right specification. Plays a role in the maintenance of a normal ciliary structure. Required for correct asymmetric expression of NODAL, LEFTY and PITX2. The chain is Rotatin from Homo sapiens (Human).